Consider the following 222-residue polypeptide: Adenylate kinase (222 aa).

10–15 (GAGKGT) contributes to the ATP binding site. Residues 30–59 (STGDMLRAAVKAGTPLGIEAKKVMDAGGLV) are NMP. AMP contacts are provided by residues T31, R36, 57–59 (GLV), 85–88 (GFPR), and Q92. The tract at residues 122-159 (GRRVHVASGRTYHVKYNPPKTEGVDDESGEPLIQRDDD) is LID. Residues R123 and 132 to 133 (TY) contribute to the ATP site. The segment at 138 to 160 (NPPKTEGVDDESGEPLIQRDDDK) is disordered. AMP contacts are provided by R156 and R167. An ATP-binding site is contributed by G207.

This sequence belongs to the adenylate kinase family. As to quaternary structure, monomer.

Its subcellular location is the cytoplasm. It carries out the reaction AMP + ATP = 2 ADP. It functions in the pathway purine metabolism; AMP biosynthesis via salvage pathway; AMP from ADP: step 1/1. Its function is as follows. Catalyzes the reversible transfer of the terminal phosphate group between ATP and AMP. Plays an important role in cellular energy homeostasis and in adenine nucleotide metabolism. The sequence is that of Adenylate kinase from Ralstonia pickettii (strain 12J).